Consider the following 331-residue polypeptide: Glycerophosphodiester phosphodiesterase 1 (331 aa).

The Cytoplasmic segment spans residues 1 to 3 (MWL). The chain crosses the membrane as a helical span at residues 4 to 24 (WEDQGGLLGPFSFLLLVLLLV). At 25–247 (TRSPVNACLL…KPRYDTFWKH (223 aa)) the chain is on the lumenal side. One can recognise a GP-PDE domain in the interval 65–331 (ISAIAHRGGS…SMVEDCEPHF (267 aa)). E97 and D99 together coordinate Mg(2+). N168 carries N-linked (GlcNAc...) asparagine glycosylation. D174 contributes to the Mg(2+) binding site. N198 carries an N-linked (GlcNAc...) asparagine glycan. A helical membrane pass occupies residues 248 to 268 (FIFVMMDILLDWSMHNILWYL). Residues 269 to 331 (CGISAFLMQK…SMVEDCEPHF (63 aa)) are Cytoplasmic-facing.

Belongs to the glycerophosphoryl diester phosphodiesterase family. In terms of assembly, interacts with PRAF2. Interacts with RGS16. Mg(2+) is required as a cofactor. Post-translationally, N-glycosylated. In terms of tissue distribution, widely expressed.

The protein localises to the cell membrane. The protein resides in the cytoplasmic vesicle membrane. It catalyses the reaction sn-glycero-3-phospho-1D-myo-inositol + H2O = myo-inositol + sn-glycerol 3-phosphate + H(+). The catalysed reaction is 1-O-(1Z-octadecenyl)-sn-glycero-3-phospho-(N-5Z,8Z,11Z,14Z-eicosatetraenoyl)-ethanolamine + H2O = 1-O-(1Z-octadecenyl)-sn-glycero-3-phosphate + N-(5Z,8Z,11Z,14Z-eicosatetraenoyl)-ethanolamine + H(+). The enzyme catalyses 1-O-(1Z-octadecenyl)-sn-glycero-3-phospho-(N-9Z-octadecenoyl)-ethanolamine + H2O = 1-O-(1Z-octadecenyl)-sn-glycero-3-phosphate + N-(9Z-octadecenoyl) ethanolamine + H(+). It carries out the reaction 1-O-(1Z-octadecenyl)-sn-glycero-3-phospho-N-hexadecanoyl-ethanolamine + H2O = 1-O-(1Z-octadecenyl)-sn-glycero-3-phosphate + N-hexadecanoylethanolamine + H(+). It catalyses the reaction N-(4Z,7Z,10Z,13Z,16Z,19Z)-docosahexaenoyl-sn-glycero-3-phosphoethanolamine + H2O = N-(4Z,7Z,10Z,13Z,16Z,19Z)-docosahexaenoyl ethanolamine + sn-glycerol 3-phosphate + H(+). The catalysed reaction is N-eicosanoyl-sn-glycero-3-phosphoethanolamine + H2O = N-eicosanoyl ethanolamine + sn-glycerol 3-phosphate + H(+). The enzyme catalyses N-hexadecanoyl-sn-glycero-3-phosphoethanolamine + H2O = N-hexadecanoylethanolamine + sn-glycerol 3-phosphate + H(+). It carries out the reaction N-(9Z-octadecenoyl)-sn-glycero-3-phosphoethanolamine + H2O = N-(9Z-octadecenoyl) ethanolamine + sn-glycerol 3-phosphate + H(+). It catalyses the reaction N-(5Z,8Z,11Z,14Z-eicosatetraenoyl)-sn-glycero-3-phosphoethanolamine + H2O = N-(5Z,8Z,11Z,14Z-eicosatetraenoyl)-ethanolamine + sn-glycerol 3-phosphate + H(+). Inhibited by EDTA, calcium chloride, and zinc chloride. Enhanced by magnesium chloride. Glycerophosphodiester phosphodiesterase activity can be modulated by G-protein signaling pathways. Hydrolyzes the phosphodiester bond of glycerophosphodiesters such as glycerophosphoinositol (GroPIns) and glycerophosphoethanolamine (GroPEth), to yield a glycerol phosphate and an alcohol. Hydrolyzes glycerophospho-N-acylethanolamines to N-acylethanolamines in the brain and participates in bioactive N-acylethanolamine biosynthesis such as anandamide (an endocannabinoid), N-palmitoylethanolamine (an anti-inflammatory), and N-oleoylethanolamine (an anorexic). In addition, has a lysophospholipase D activity by hydrolyzing N-acyl-lysoplasmenylethanolamine (N-acyl-lysoPlsEt) to N-acylethanolamine. However lysophospholipase D activity is lower than glycerophosphodiester phosphodiesterase activity. Has little or no activity towards glycerophosphocholine. This chain is Glycerophosphodiester phosphodiesterase 1, found in Homo sapiens (Human).